A 185-amino-acid chain; its full sequence is MSQEKKEELQSEAQVTKEETPQANEAAAEAEAIVNEFDLLQEELNSLKDKYARVHADFENIKKRLEREKYSAVEYANEKFAKDMIPVMDALHMALSSSSSIIDSAEHLEKLKEGIELTLKQLSTALEKHGITMVSHDAPFDPNIHNAIQSVDSDTVESGQIVQTFQTGYKYKDRPLREAMVVVAN.

The segment covering 1–20 (MSQEKKEELQSEAQVTKEET) has biased composition (basic and acidic residues). Residues 1–28 (MSQEKKEELQSEAQVTKEETPQANEAAA) are disordered.

It belongs to the GrpE family. In terms of assembly, homodimer.

It localises to the cytoplasm. In terms of biological role, participates actively in the response to hyperosmotic and heat shock by preventing the aggregation of stress-denatured proteins, in association with DnaK and GrpE. It is the nucleotide exchange factor for DnaK and may function as a thermosensor. Unfolded proteins bind initially to DnaJ; upon interaction with the DnaJ-bound protein, DnaK hydrolyzes its bound ATP, resulting in the formation of a stable complex. GrpE releases ADP from DnaK; ATP binding to DnaK triggers the release of the substrate protein, thus completing the reaction cycle. Several rounds of ATP-dependent interactions between DnaJ, DnaK and GrpE are required for fully efficient folding. This is Protein GrpE from Sulfurimonas denitrificans (strain ATCC 33889 / DSM 1251) (Thiomicrospira denitrificans (strain ATCC 33889 / DSM 1251)).